The primary structure comprises 474 residues: tRNA-2-methylthio-N(6)-dimethylallyladenosine synthase (474 aa).

Residues 3–120 (KKLHIKTWGC…LPEMINHVQG (118 aa)) enclose the MTTase N-terminal domain. [4Fe-4S] cluster contacts are provided by Cys12, Cys49, Cys83, Cys157, Cys161, and Cys164. Residues 143-375 (RAEGPTAFVS…QQRISQQAME (233 aa)) form the Radical SAM core domain. Residues 378–441 (RKMVGTVQRV…ASSLRGILLR (64 aa)) enclose the TRAM domain.

It belongs to the methylthiotransferase family. MiaB subfamily. Monomer. Requires [4Fe-4S] cluster as cofactor.

The protein resides in the cytoplasm. The catalysed reaction is N(6)-dimethylallyladenosine(37) in tRNA + (sulfur carrier)-SH + AH2 + 2 S-adenosyl-L-methionine = 2-methylsulfanyl-N(6)-dimethylallyladenosine(37) in tRNA + (sulfur carrier)-H + 5'-deoxyadenosine + L-methionine + A + S-adenosyl-L-homocysteine + 2 H(+). Its function is as follows. Catalyzes the methylthiolation of N6-(dimethylallyl)adenosine (i(6)A), leading to the formation of 2-methylthio-N6-(dimethylallyl)adenosine (ms(2)i(6)A) at position 37 in tRNAs that read codons beginning with uridine. This Yersinia pseudotuberculosis serotype O:1b (strain IP 31758) protein is tRNA-2-methylthio-N(6)-dimethylallyladenosine synthase.